Consider the following 229-residue polypeptide: Nectarin-1 (229 aa).

An N-terminal signal peptide occupies residues 1–32; the sequence is MAAFGIKSKIFQIMEMTILFLFAISIDRYCFA. An intrachain disulfide couples C42 to C57. A glycan (N-linked (GlcNAc...) asparagine) is linked at N60. Residues 69–217 form the Cupin type-1 domain; that stretch reads FAISKPGATN…TFQINIEDVQ (149 aa). Residues H117, H119, E124, and H163 each contribute to the Mn(2+) site.

It belongs to the germin family. As to quaternary structure, monomer. In the absence of manganese, it forms tetrameric and pentameric forms which show superoxide dismutase activity. It depends on Mn(2+) as a cofactor. Glycosylated.

The protein localises to the secreted. The protein resides in the extracellular space. Its subcellular location is the apoplast. It catalyses the reaction 2 superoxide + 2 H(+) = H2O2 + O2. In terms of biological role, may interact with bacterial adhesins thereby protecting the reproductive tissues from microbial attack. Has no oxalate oxidase activity. The protein is Nectarin-1 (NEC1) of Nicotiana plumbaginifolia (Leadwort-leaved tobacco).